The primary structure comprises 182 residues: MPRLFSYLLGVWLLLSQLPREIPGQSTNDFIKACGRELVRLWVEICGSVSWGRTALSLEEPQLETGPPAETMPSSITKDAEILKMMLEFVPNLPQELKATLSERQPSLRELQQSASKDSNLNFEEFKKIILNRQNEAEDKSLLELKNLGLDKHSRKKRLFRMTLSEKCCQVGCIRKDIARLC.

The N-terminal stretch at 1-24 (MPRLFSYLLGVWLLLSQLPREIPG) is a signal peptide. The residue at position 25 (glutamine 25) is a Pyrrolidone carboxylic acid. 3 cysteine pairs are disulfide-bonded: cysteine 34/cysteine 169, cysteine 46/cysteine 182, and cysteine 168/cysteine 173. The propeptide at 57 to 154 (SLEEPQLETG…LKNLGLDKHS (98 aa)) is connecting peptide. Residues 159 to 160 (LF) constitute a propeptide that is removed on maturation.

Belongs to the insulin family. Heterodimer of a B chain and an A chain linked by two disulfide bonds.

It is found in the secreted. Its function is as follows. Relaxin is an ovarian hormone that acts with estrogen to produce dilatation of the birth canal in many mammals. This chain is Prorelaxin (RLN), found in Sus scrofa (Pig).